A 252-amino-acid polypeptide reads, in one-letter code: Phosphoglycolate phosphatase (252 aa).

The active-site Nucleophile is aspartate 13. Aspartate 13, aspartate 15, and aspartate 192 together coordinate Mg(2+).

The protein belongs to the HAD-like hydrolase superfamily. CbbY/CbbZ/Gph/YieH family. In terms of assembly, monomer. Requires Mg(2+) as cofactor. Chloride is required as a cofactor.

It carries out the reaction 2-phosphoglycolate + H2O = glycolate + phosphate. Its pathway is organic acid metabolism; glycolate biosynthesis; glycolate from 2-phosphoglycolate: step 1/1. Specifically catalyzes the dephosphorylation of 2-phosphoglycolate. Is involved in the dissimilation of the intracellular 2-phosphoglycolate formed during the DNA repair of 3'-phosphoglycolate ends, a major class of DNA lesions induced by oxidative stress. In Salmonella typhi, this protein is Phosphoglycolate phosphatase.